The chain runs to 602 residues: Threonine--tRNA ligase (602 aa).

Positions 208-499 (DHRKLGIELK…LTEHCAGEFP (292 aa)) are catalytic. Zn(2+) contacts are provided by cysteine 300, histidine 351, and histidine 476.

It belongs to the class-II aminoacyl-tRNA synthetase family. In terms of assembly, homodimer. Requires Zn(2+) as cofactor.

The protein resides in the cytoplasm. The enzyme catalyses tRNA(Thr) + L-threonine + ATP = L-threonyl-tRNA(Thr) + AMP + diphosphate + H(+). Functionally, catalyzes the attachment of threonine to tRNA(Thr) in a two-step reaction: L-threonine is first activated by ATP to form Thr-AMP and then transferred to the acceptor end of tRNA(Thr). Also edits incorrectly charged L-seryl-tRNA(Thr). This chain is Threonine--tRNA ligase, found in Campylobacter jejuni subsp. doylei (strain ATCC BAA-1458 / RM4099 / 269.97).